The primary structure comprises 1550 residues: Cellulose synthase 1 (1550 aa).

The tract at residues 1–741 (MPEVRSSTQS…KERVLKGTVK (741 aa)) is catalytic. A run of 3 helical transmembrane segments spans residues 26–46 (GAGLTIGVFGLCALIAATSVT), 47–67 (LPPEQQLIVAFVCVVIFFIVG), and 106–126 (GLLGTMLLVAELYALMMLFLS). The segment at 147 to 240 (EWPTVDIFVP…YILIFDCDHV (94 aa)) is catalytic subdomain A. Asp189 is an active-site residue. Substrate is bound by residues Asp236 and Asp238. Residues 317-377 (TAIEQIGGFA…GQRVRWARGM (61 aa)) form a catalytic subdomain B region. Asp333 is a catalytic residue. The next 5 membrane-spanning stretches (helical) occupy residues 398–418 (LCYLSAMTSFLFAVPRVIFLS), 423–443 (FLFFGQNIIAASPLALLAYAI), 468–488 (VYETTMALFLVRVTIVTLLSP), 507–527 (FDLGAVYPNIILGLIMFGGLA), and 547–567 (LLNSAWAMLSLIIILAAIAVG). The PilZ domain maps to 572-647 (QKRNSHRIPA…PARIIRAGNG (76 aa)). 2 disordered regions span residues 711 to 734 (SSPTKPLAGNALSDDTNNPSRKER) and 768 to 813 (APAH…QPLA). The tract at residues 742-1550 (MVSLLALLTF…KQLEDERRKS (809 aa)) is cyclic di-GMP binding domain. Residues 768 to 796 (APAHQPEASDLPPLPALLPATSGAAQAGA) are compositionally biased toward low complexity. Residues 1513-1533 (VLLVGLLGCILIVSVLARALA) form a helical membrane-spanning segment.

In the N-terminal section; belongs to the glycosyltransferase 2 family. It in the C-terminal section; belongs to the AcsB/BcsB family. The cofactor is Mg(2+).

The protein resides in the cell inner membrane. The catalysed reaction is [(1-&gt;4)-beta-D-glucosyl](n) + UDP-alpha-D-glucose = [(1-&gt;4)-beta-D-glucosyl](n+1) + UDP + H(+). It functions in the pathway glycan metabolism; bacterial cellulose biosynthesis. Its activity is regulated as follows. Activated by c-di-GMP. Bifunctional protein comprised of a catalytic subunit and a regulatory subunit. The catalytic subunit of cellulose synthase polymerizes uridine 5'-diphosphate glucose to cellulose in a processive way. The thick cellulosic mats generated by this enzyme probably provide a specialized protective environment to the bacterium. The regulatory subunit binds bis-(3'-5') cyclic diguanylic acid (c-di-GMP). This Komagataeibacter xylinus (Gluconacetobacter xylinus) protein is Cellulose synthase 1 (acsAB).